The sequence spans 403 residues: Coenzyme A biosynthesis bifunctional protein CoaBC (403 aa).

The segment at methionine 1–arginine 197 is phosphopantothenoylcysteine decarboxylase. Positions valine 198–leucine 403 are phosphopantothenate--cysteine ligase. CTP is bound by residues aspartate 287, lysine 297, and phenylalanine 330.

This sequence in the N-terminal section; belongs to the HFCD (homo-oligomeric flavin containing Cys decarboxylase) superfamily. The protein in the C-terminal section; belongs to the PPC synthetase family. The cofactor is Mg(2+). FMN serves as cofactor.

The catalysed reaction is N-[(R)-4-phosphopantothenoyl]-L-cysteine + H(+) = (R)-4'-phosphopantetheine + CO2. It carries out the reaction (R)-4'-phosphopantothenate + L-cysteine + CTP = N-[(R)-4-phosphopantothenoyl]-L-cysteine + CMP + diphosphate + H(+). It functions in the pathway cofactor biosynthesis; coenzyme A biosynthesis. Its function is as follows. Catalyzes two sequential steps in the biosynthesis of coenzyme A. In the first step cysteine is conjugated to 4'-phosphopantothenate to form 4-phosphopantothenoylcysteine. In the second step the latter compound is decarboxylated to form 4'-phosphopantotheine. This chain is Coenzyme A biosynthesis bifunctional protein CoaBC, found in Thermococcus kodakarensis (strain ATCC BAA-918 / JCM 12380 / KOD1) (Pyrococcus kodakaraensis (strain KOD1)).